We begin with the raw amino-acid sequence, 520 residues long: Protein FAM124A (520 aa).

Disordered regions lie at residues 1 to 34 (MDRKAGEDDWEDSGAETGGSDYSRLSSTSSELSV) and 311 to 334 (FKSGKHKGRAGNGQVQHFGGSQMD). Residues 20 to 32 (SDYSRLSSTSSEL) are compositionally biased toward low complexity.

It belongs to the FAM124 family.

The sequence is that of Protein FAM124A (fam124a) from Xenopus laevis (African clawed frog).